The primary structure comprises 337 residues: Fructose-1,6-bisphosphatase class 1 (337 aa).

Mg(2+) contacts are provided by E92, D114, L116, and D117. Substrate is bound by residues D117 to S120, N209, and K275. E281 serves as a coordination point for Mg(2+).

The protein belongs to the FBPase class 1 family. In terms of assembly, homotetramer. The cofactor is Mg(2+).

It is found in the cytoplasm. It catalyses the reaction beta-D-fructose 1,6-bisphosphate + H2O = beta-D-fructose 6-phosphate + phosphate. It participates in carbohydrate biosynthesis; gluconeogenesis. This is Fructose-1,6-bisphosphatase class 1 from Thiobacillus denitrificans (strain ATCC 25259 / T1).